The following is a 513-amino-acid chain: ATP synthase subunit alpha (513 aa).

G169–T176 is an ATP binding site.

The protein belongs to the ATPase alpha/beta chains family. As to quaternary structure, F-type ATPases have 2 components, CF(1) - the catalytic core - and CF(0) - the membrane proton channel. CF(1) has five subunits: alpha(3), beta(3), gamma(1), delta(1), epsilon(1). CF(0) has three main subunits: a(1), b(2) and c(9-12). The alpha and beta chains form an alternating ring which encloses part of the gamma chain. CF(1) is attached to CF(0) by a central stalk formed by the gamma and epsilon chains, while a peripheral stalk is formed by the delta and b chains.

The protein resides in the cell inner membrane. It carries out the reaction ATP + H2O + 4 H(+)(in) = ADP + phosphate + 5 H(+)(out). Produces ATP from ADP in the presence of a proton gradient across the membrane. The alpha chain is a regulatory subunit. This Haemophilus influenzae (strain ATCC 51907 / DSM 11121 / KW20 / Rd) protein is ATP synthase subunit alpha.